Reading from the N-terminus, the 172-residue chain is uncharacterized protein (172 aa).

Residues 1–148 (MANSQKVIDV…TIHDFFENGN (148 aa)) form the Ferritin-like diiron domain.

This is an uncharacterized protein from Ureaplasma urealyticum (Ureaplasma urealyticum biotype 2).